Consider the following 287-residue polypeptide: Phosphatidylinositol transfer protein 5 (287 aa).

The interval 252 to 287 (FHNNNNNNSNNSNNNNNNNTQPQRSSFFSRSTDGNK) is disordered. The segment covering 254–270 (NNNNNNSNNSNNNNNNN) has biased composition (low complexity). The span at 271 to 287 (TQPQRSSFFSRSTDGNK) shows a compositional bias: polar residues.

It belongs to the PtdIns transfer protein family. PI transfer class IIA subfamily.

Phosphatidylinositol transfer proteins mediate the monomeric transport of lipids by shielding a lipid from the aqueous environment and binding the lipid in a hydrophobic cavity. The protein is Phosphatidylinositol transfer protein 5 (pitE) of Dictyostelium discoideum (Social amoeba).